The following is a 498-amino-acid chain: Putative phosphotransferase 057R (498 aa).

The chain is Putative phosphotransferase 057R from Dryophytes versicolor (chameleon treefrog).